Consider the following 163-residue polypeptide: 2-C-methyl-D-erythritol 2,4-cyclodiphosphate synthase (163 aa).

2 residues coordinate a divalent metal cation: D12 and H14. 4-CDP-2-C-methyl-D-erythritol 2-phosphate-binding positions include 12-14 (DVH) and 38-39 (HS). An a divalent metal cation-binding site is contributed by H46. 4-CDP-2-C-methyl-D-erythritol 2-phosphate is bound by residues 60–62 (DIG), 65–69 (FPDTD), 136–139 (TTTE), F143, and R146.

It belongs to the IspF family. Homotrimer. Requires a divalent metal cation as cofactor.

The catalysed reaction is 4-CDP-2-C-methyl-D-erythritol 2-phosphate = 2-C-methyl-D-erythritol 2,4-cyclic diphosphate + CMP. It functions in the pathway isoprenoid biosynthesis; isopentenyl diphosphate biosynthesis via DXP pathway; isopentenyl diphosphate from 1-deoxy-D-xylulose 5-phosphate: step 4/6. Involved in the biosynthesis of isopentenyl diphosphate (IPP) and dimethylallyl diphosphate (DMAPP), two major building blocks of isoprenoid compounds. Catalyzes the conversion of 4-diphosphocytidyl-2-C-methyl-D-erythritol 2-phosphate (CDP-ME2P) to 2-C-methyl-D-erythritol 2,4-cyclodiphosphate (ME-CPP) with a corresponding release of cytidine 5-monophosphate (CMP). This is 2-C-methyl-D-erythritol 2,4-cyclodiphosphate synthase from Acinetobacter baylyi (strain ATCC 33305 / BD413 / ADP1).